Here is a 105-residue protein sequence, read N- to C-terminus: Small ribosomal subunit protein uS10c (105 aa).

It belongs to the universal ribosomal protein uS10 family. In terms of assembly, part of the 30S ribosomal subunit.

The protein localises to the plastid. Its subcellular location is the cyanelle. In terms of biological role, involved in the binding of tRNA to the ribosomes. This chain is Small ribosomal subunit protein uS10c (rps10), found in Cyanophora paradoxa.